We begin with the raw amino-acid sequence, 320 residues long: Ferrochelatase (320 aa).

Residues H194 and E275 each contribute to the Fe cation site.

It belongs to the ferrochelatase family.

It localises to the cytoplasm. The catalysed reaction is heme b + 2 H(+) = protoporphyrin IX + Fe(2+). It participates in porphyrin-containing compound metabolism; protoheme biosynthesis; protoheme from protoporphyrin-IX: step 1/1. Catalyzes the ferrous insertion into protoporphyrin IX. In Pectobacterium atrosepticum (strain SCRI 1043 / ATCC BAA-672) (Erwinia carotovora subsp. atroseptica), this protein is Ferrochelatase.